The chain runs to 372 residues: NAD(P)H-quinone oxidoreductase subunit 1 (372 aa).

9 helical membrane-spanning segments follow: residues 27–47, 65–85, 97–117, 128–148, 166–186, 204–224, 266–286, 308–328, and 347–367; these read AIWM…GVLV, PEYI…KLVF, WLFT…YLIV, IGTG…GLLM, AAQS…IVMM, ILGW…IAAL, VLSA…PIPI, ALGI…AILL, and FLLP…LAFP.

The protein belongs to the complex I subunit 1 family. NDH-1 is composed of at least 11 different subunits.

It is found in the cellular thylakoid membrane. It carries out the reaction a plastoquinone + NADH + (n+1) H(+)(in) = a plastoquinol + NAD(+) + n H(+)(out). The enzyme catalyses a plastoquinone + NADPH + (n+1) H(+)(in) = a plastoquinol + NADP(+) + n H(+)(out). NDH-1 shuttles electrons from an unknown electron donor, via FMN and iron-sulfur (Fe-S) centers, to quinones in the respiratory and/or the photosynthetic chain. The immediate electron acceptor for the enzyme in this species is believed to be plastoquinone. Couples the redox reaction to proton translocation, and thus conserves the redox energy in a proton gradient. The polypeptide is NAD(P)H-quinone oxidoreductase subunit 1 (Trichormus variabilis (strain ATCC 29413 / PCC 7937) (Anabaena variabilis)).